The sequence spans 295 residues: Probable isochorismatase (295 aa).

Positions 1-21 (MGIPKIAGYPLPTPAEFPDNR) are disordered. Positions 207–286 (EIRSQKPLTL…EWWLVIEQAR (80 aa)) constitute a Carrier domain. O-(pantetheine 4'-phosphoryl)serine is present on S247.

Belongs to the isochorismatase family. It depends on pantetheine 4'-phosphate as a cofactor.

It catalyses the reaction isochorismate + H2O = (2S,3S)-2,3-dihydroxy-2,3-dihydrobenzoate + pyruvate. It functions in the pathway siderophore biosynthesis; vulnibactin biosynthesis. Its function is as follows. Involved in the biosynthesis of the catechol siderophore vulnibactin. Vulnibactin is a chelating compound involved in transporting iron from the bacterial environment into the cell cytoplasm. This Vibrio vulnificus (strain CMCP6) protein is Probable isochorismatase (venB).